A 174-amino-acid polypeptide reads, in one-letter code: Transcription antitermination protein NusB (174 aa).

The segment at 1 to 28 (MVEPKKPFMRKPPPKTGDKKPGDRKANR) is disordered. Basic and acidic residues predominate over residues 16 to 25 (TGDKKPGDRK).

It belongs to the NusB family.

Its function is as follows. Involved in transcription antitermination. Required for transcription of ribosomal RNA (rRNA) genes. Binds specifically to the boxA antiterminator sequence of the ribosomal RNA (rrn) operons. This Rhodopseudomonas palustris (strain BisB5) protein is Transcription antitermination protein NusB.